A 56-amino-acid chain; its full sequence is Prokaryotic ubiquitin-like protein UBact (56 aa).

Residues 1–28 (MPQDQQRKKQFDPNPNRDDSQRKTPVDK) are compositionally biased toward basic and acidic residues. Residues 1 to 33 (MPQDQQRKKQFDPNPNRDDSQRKTPVDKEIDDI) form a disordered region. A Deamidated glutamine modification is found at Gln56. Residue Gln56 forms an Isoglutamyl lysine isopeptide (Gln-Lys) (interchain with K-? in acceptor proteins) linkage.

This sequence belongs to the ubiquitin-like protein UBact family. Post-translationally, may be modified by deamidation of its C-terminal glutamine to glutamate by the adjacently encoded deamidase. This could be a prerequisite to the subsequent conjugation, as shown in the other prokaryotic ubiquitin-like protein Pup.

May function as a protein modifier covalently attached to lysine residues of substrate proteins. This may serve to target the modified proteins for degradation by proteasomes. The polypeptide is Prokaryotic ubiquitin-like protein UBact (Yanofskybacteria sp. (strain GW2011_GWA1_39_13)).